The sequence spans 293 residues: Phosphatidylglycerol--prolipoprotein diacylglyceryl transferase (293 aa).

Helical transmembrane passes span 45 to 65 (FELRWYSTLILMGFLISYFVA), 81 to 101 (ELIFYGVIAGIVGARLYYVLF), 115 to 135 (IWEGGLAIHGAVIGALLTGFL), and 144 to 164 (FTFLQATDLFTSVLPLGQAIG). Arginine 165 serves as a coordination point for a 1,2-diacyl-sn-glycero-3-phospho-(1'-sn-glycerol). Transmembrane regions (helical) follow at residues 204 to 224 (PTFLYESIWDLLVFFMLSVYF), 231 to 249 (HGEVTCLYFVLYSLGRIVI), and 262 to 282 (IKAAQLLSAVLILLGFTGFLI).

It belongs to the Lgt family.

It is found in the cell inner membrane. The enzyme catalyses L-cysteinyl-[prolipoprotein] + a 1,2-diacyl-sn-glycero-3-phospho-(1'-sn-glycerol) = an S-1,2-diacyl-sn-glyceryl-L-cysteinyl-[prolipoprotein] + sn-glycerol 1-phosphate + H(+). It participates in protein modification; lipoprotein biosynthesis (diacylglyceryl transfer). Catalyzes the transfer of the diacylglyceryl group from phosphatidylglycerol to the sulfhydryl group of the N-terminal cysteine of a prolipoprotein, the first step in the formation of mature lipoproteins. The chain is Phosphatidylglycerol--prolipoprotein diacylglyceryl transferase from Thermotoga maritima (strain ATCC 43589 / DSM 3109 / JCM 10099 / NBRC 100826 / MSB8).